Here is a 6907-residue protein sequence, read N- to C-terminus: Fibrous sheath-interacting protein 2 (6907 aa).

The disordered stretch occupies residues 273 to 292 (EERIEEQQHRNREESDRKKQ). Ser430 is subject to Phosphoserine. 8 disordered regions span residues 439–472 (SQAFLDPSKEEKETNADWDGRPTKRSSYLCESGP), 954–990 (FQKSRQPRISSPSDTKEKYRLTGTRLSNSPRSGRPFP), 1545–1573 (VQEDNKEETKSKAKPVAPVSSKTPSTKEM), 3202–3257 (VSSD…FDQT), 5650–5672 (RTSSNEGRRDSPTQTCRDEEHHS), 5725–5781 (SAQS…KPGI), 5850–5880 (DKGNQFPGGKVSSVPKVPPRYKEPTTDEAPS), and 6852–6874 (GSANPSKEVISETPKPDVSKQGS). Basic and acidic residues predominate over residues 445–460 (PSKEEKETNADWDGRP). Residues 954–966 (FQKSRQPRISSPS) are compositionally biased toward polar residues. Basic and acidic residues-rich tracts occupy residues 1545 to 1555 (VQEDNKEETKS) and 3213 to 3229 (SVEDTVKNSEPTKRPDS). Low complexity predominate over residues 5728–5741 (SVTTKKVSSSTNKN). A coiled-coil region spans residues 5738–5766 (TNKNISAKEKEEEEREKEKVREEIKSEPS). The segment covering 5743 to 5778 (SAKEKEEEEREKEKVREEIKSEPSKPDDPQNQRESK) has biased composition (basic and acidic residues).

As to quaternary structure, may interact with AKAP4. As to expression, predominantly expressed in testis.

In terms of biological role, plays a role in spermatogenesis. The sequence is that of Fibrous sheath-interacting protein 2 (FSIP2) from Homo sapiens (Human).